Reading from the N-terminus, the 751-residue chain is Phosphate transporter PHO1 homolog 8 (751 aa).

An SPX domain is found at 1-299; that stretch reads MKFGKEYVAQ…LRNAAKLYME (299 aa). Residues 1–351 lie on the Cytoplasmic side of the membrane; it reads MKFGKEYVAQ…KVTKEKHRIT (351 aa). The helical transmembrane segment at 352–372 threads the bilayer; that stretch reads FSTGFFVGCTVSLVIALGLFI. The Extracellular segment spans residues 373 to 392; that stretch reads HARNIMGAVGHKLYMETMFP. The chain crosses the membrane as a helical span at residues 393–413; the sequence is LYSLFAFVVLHMIMYASNIYF. The Cytoplasmic segment spans residues 414-434; sequence WKRYRVNYPFIFGFKEGTELG. Residues 435 to 455 traverse the membrane as a helical segment; sequence YGHVLLLSFGLGTLALCAVLV. Residues 456–473 lie on the Extracellular side of the membrane; the sequence is NMDMEMDPNTNDYKTITE. Residues 474 to 494 traverse the membrane as a helical segment; the sequence is LVPLFVVALVIAISVCPFNIF. The Cytoplasmic segment spans residues 495–623; the sequence is YRSSRFFFLM…FSINRGNDWK (129 aa). One can recognise an EXS domain in the interval 558–751; the sequence is KSSDVYSTFY…NYDEEEDRDS (194 aa). The chain crosses the membrane as a helical span at residues 624-644; that stretch reads IAAWVFSGLATFYGTYWDIVY. At 645-667 the chain is on the extracellular side; the sequence is DWGLLHRPSKSWLREKLLVPHKS. Residues 668 to 688 traverse the membrane as a helical segment; that stretch reads VYYVAMVVNVVLRLAWLQTVL. Residues 689–751 lie on the Cytoplasmic side of the membrane; that stretch reads DFNISFLHRE…NYDEEEDRDS (63 aa).

This sequence belongs to the SYG1 (TC 2.A.94) family. As to expression, expressed in root epidermis, leaf hydathodes, trichomes and petioles, stem vascular cylinder, receptacle, stigma apex and pollen grains.

It localises to the cell membrane. In terms of biological role, may transport inorganic phosphate (Pi). This chain is Phosphate transporter PHO1 homolog 8 (PHO1-H8), found in Arabidopsis thaliana (Mouse-ear cress).